A 1312-amino-acid chain; its full sequence is uncharacterized protein (1312 aa).

Residues 1-20 form the signal peptide; the sequence is MRNNLIYTMFLSCLHFETFC. Residues 299–344 are compositionally biased toward low complexity; sequence TTTSSSTMLSSTTLLTTETETRESSSTGSTQTTTPSTEPSTTITTP. Disordered regions lie at residues 299-503, 565-609, 645-692, 749-775, 812-864, 899-942, 1048-1079, and 1114-1165; these read TTTS…TTTY, EITS…PTGG, KETR…PTGG, SSSS…PTGG, KTRT…GGTT, KTRT…PTGG, KTRT…TGGT, and NTTR…TLET. A compositionally biased stretch (polar residues) spans 345 to 357; that stretch reads MEQSSTVSSVQKT. Low complexity predominate over residues 365–503; sequence SSSTTVPTSA…STPATPTTTY (139 aa). Residues 565 to 574 are compositionally biased toward basic and acidic residues; it reads EITSDAEGCK. The span at 576–609 shows a compositional bias: low complexity; the sequence is TSSTPTPSSTSVHSTTATPSTTPGTTTYNWPTGG. Over residues 645–659 the composition is skewed to basic and acidic residues; it reads KETRTETTTDADGCK. Over residues 660–692 the composition is skewed to low complexity; the sequence is KTSSTSSSTPSLKHSTTPTPTPGTTTYNWPTGG. Over residues 813-825 the composition is skewed to basic and acidic residues; it reads TRTETTTDAEGCK. The span at 826 to 864 shows a compositional bias: low complexity; sequence KTSSTSKISTTPTSPTSSKPTPTSTSMTTTYNWPTGGTT. The segment covering 899–908 has biased composition (polar residues); that stretch reads KTRTETTTDA. Positions 914 to 942 are enriched in low complexity; the sequence is TSSTSLKPTSPSSSTASPPTTTYNWPTGG. Over residues 1048-1057 the composition is skewed to polar residues; the sequence is KTRTETTSDA. A compositionally biased stretch (low complexity) spans 1063–1076; that stretch reads TSTTQTPTTFNWPT. The span at 1114–1123 shows a compositional bias: polar residues; the sequence is NTTRTETTSD. Residues 1130–1154 are compositionally biased toward low complexity; the sequence is TSSGTTSTMSPGTTGGTTVSRTTNS. The segment covering 1155–1164 has biased composition (polar residues); the sequence is NNPIDSSTLE. Positions 1239–1306 constitute a Sushi domain; sequence ATCSSLNLNL…WSGTPEKCVA (68 aa). Cystine bridges form between Cys1241–Cys1291 and Cys1273–Cys1304.

The protein resides in the secreted. This is an uncharacterized protein from Caenorhabditis elegans.